Consider the following 424-residue polypeptide: UDP-N-acetylglucosamine 1-carboxyvinyltransferase (424 aa).

22 to 23 (KN) is a binding site for phosphoenolpyruvate. Residue Arg-98 coordinates UDP-N-acetyl-alpha-D-glucosamine. Cys-122 serves as the catalytic Proton donor. The residue at position 122 (Cys-122) is a 2-(S-cysteinyl)pyruvic acid O-phosphothioketal. UDP-N-acetyl-alpha-D-glucosamine contacts are provided by residues 127–131 (RPVDQ), Asp-312, and Ile-334.

This sequence belongs to the EPSP synthase family. MurA subfamily.

The protein localises to the cytoplasm. It carries out the reaction phosphoenolpyruvate + UDP-N-acetyl-alpha-D-glucosamine = UDP-N-acetyl-3-O-(1-carboxyvinyl)-alpha-D-glucosamine + phosphate. It participates in cell wall biogenesis; peptidoglycan biosynthesis. Cell wall formation. Adds enolpyruvyl to UDP-N-acetylglucosamine. This Xanthomonas euvesicatoria pv. vesicatoria (strain 85-10) (Xanthomonas campestris pv. vesicatoria) protein is UDP-N-acetylglucosamine 1-carboxyvinyltransferase.